A 215-amino-acid polypeptide reads, in one-letter code: Cytochrome b6 (215 aa).

Residues 32-52 (IFHCLGGITLTCFLVQVATGF) form a helical membrane-spanning segment. Cys35 contributes to the heme c binding site. Heme b-binding residues include His86 and His100. 3 consecutive transmembrane segments (helical) span residues 90-110 (ASMMVLMMILHVFRVYLTGGF), 116-136 (LTWVTGVVLAVLTASFGVTGY), and 186-206 (LHTFVLPLLTAVFMLMHFSMI). Heme b-binding residues include His187 and His202.

This sequence belongs to the cytochrome b family. PetB subfamily. In terms of assembly, the 4 large subunits of the cytochrome b6-f complex are cytochrome b6, subunit IV (17 kDa polypeptide, PetD), cytochrome f and the Rieske protein, while the 4 small subunits are PetG, PetL, PetM and PetN. The complex functions as a dimer. Requires heme b as cofactor. Heme c serves as cofactor.

It is found in the plastid. It localises to the chloroplast thylakoid membrane. In terms of biological role, component of the cytochrome b6-f complex, which mediates electron transfer between photosystem II (PSII) and photosystem I (PSI), cyclic electron flow around PSI, and state transitions. This is Cytochrome b6 from Nymphaea alba (White water-lily).